The following is a 421-amino-acid chain: Testin (421 aa).

In terms of domain architecture, PET spans 92 to 199 (MILTNPVAAK…GDVKLPQEMD (108 aa)). LIM zinc-binding domains follow at residues 234 to 297 (YSCY…CDSE), 299 to 359 (PRCA…NHAV), and 362 to 421 (QGCH…KMMS).

Belongs to the prickle / espinas / testin family. Interacts via LIM domain 1 with ZYX. Interacts (via LIM domain 3) with ENAH and VASP. Interacts with ALKBH4, talin, actin, alpha-actinin, GRIP1 and PXN. Interacts (via LIM domain 2) with ACTL7A (via N-terminus). Heterodimer with ACTL7A; the heterodimer interacts with ENAH to form a heterotrimer.

It is found in the cytoplasm. The protein resides in the cell junction. The protein localises to the focal adhesion. In terms of biological role, scaffold protein that may play a role in cell adhesion, cell spreading and in the reorganization of the actin cytoskeleton. Plays a role in the regulation of cell proliferation. May act as a tumor suppressor. This is Testin (TES) from Loxodonta africana (African elephant).